A 164-amino-acid polypeptide reads, in one-letter code: Phosphopantetheine adenylyltransferase (164 aa).

A substrate-binding site is contributed by Thr-10. ATP-binding positions include 10 to 11 (TF) and His-18. Substrate-binding residues include Lys-42, Leu-74, and Arg-88. Residues 89-91 (GIR), Glu-99, and 124-130 (YAFVSST) each bind ATP.

The protein belongs to the bacterial CoaD family. As to quaternary structure, homohexamer. Mg(2+) is required as a cofactor.

It localises to the cytoplasm. It catalyses the reaction (R)-4'-phosphopantetheine + ATP + H(+) = 3'-dephospho-CoA + diphosphate. Its pathway is cofactor biosynthesis; coenzyme A biosynthesis; CoA from (R)-pantothenate: step 4/5. Reversibly transfers an adenylyl group from ATP to 4'-phosphopantetheine, yielding dephospho-CoA (dPCoA) and pyrophosphate. In Tolumonas auensis (strain DSM 9187 / NBRC 110442 / TA 4), this protein is Phosphopantetheine adenylyltransferase.